Here is a 226-residue protein sequence, read N- to C-terminus: PKHD-type hydroxylase PST_0995 (226 aa).

A Fe2OG dioxygenase domain is found at 78 to 178; the sequence is KVFPPLFNCY…RLASFFWIQS (101 aa). Fe cation-binding residues include His-96, Asp-98, and His-159. Residue Arg-169 participates in 2-oxoglutarate binding.

Fe(2+) serves as cofactor. The cofactor is L-ascorbate.

In Stutzerimonas stutzeri (strain A1501) (Pseudomonas stutzeri), this protein is PKHD-type hydroxylase PST_0995.